The chain runs to 525 residues: D-aminopeptidase (525 aa).

Residue S62 is the Nucleophile of the active site. K65 (proton donor/acceptor) is an active-site residue. The interval P485–D495 is important for specificity. D489 is a substrate binding site.

This sequence belongs to the peptidase S12 family. As to quaternary structure, homodimer.

The enzyme catalyses Release of an N-terminal D-amino acid from a peptide, Xaa-|-Yaa-, in which Xaa is preferably D-Ala, D-Ser or D-Thr. D-amino acid amides and methyl esters also are hydrolyzed, as is glycine amide.. Inhibited by beta-lactam compounds such as 6-aminopenicillic acid, 7-aminocephalosporanic acid, benzylpenicillin and ampicillin. Inhibited by p-chloromercuribenzoate. In terms of biological role, hydrolyzes N-terminal residues in D-amino acid-containing peptides. The polypeptide is D-aminopeptidase (Gluconobacter oxydans (strain 621H) (Gluconobacter suboxydans)).